A 245-amino-acid polypeptide reads, in one-letter code: Chymotrypsinogen A (245 aa).

5 disulfides stabilise this stretch: C1–C122, C42–C58, C136–C201, C168–C182, and C191–C220. Positions 14–15 (SR) are excised as a propeptide. The Peptidase S1 domain maps to 16–243 (IVNGEEAVPG…LVNWVQQTLA (228 aa)). Active-site charge relay system residues include H57 and D102. Positions 147-148 (TN) are excised as a propeptide. The Charge relay system role is filled by S195.

This sequence belongs to the peptidase S1 family.

The protein resides in the secreted. It is found in the extracellular space. It catalyses the reaction Preferential cleavage: Tyr-|-Xaa, Trp-|-Xaa, Phe-|-Xaa, Leu-|-Xaa.. The protein is Chymotrypsinogen A of Bos taurus (Bovine).